The sequence spans 297 residues: MAEISAKLVKELRDKTGAGMMDCKKALQESNGDMEAAITWLRQKGLASAGKKAGRVTSEGLVDSYIHTGGRIGVLVEVNCETDFVARNEKFKTLVQDIAKQIAACPNVEFVSLDDIPAEYKEKERQIALGSDALKGKPPEVQEKIVAGKLEKTLKELCLLYQPFIRDQSKTVEELVKEHIAELGENIRIRRFQRFVLGEGIEKQETNLAEEVAAQTQAMRAAAQTAAAAETAPPEVSEPEPAAAVTAEEPTPEPVAAAEQPAEPVSELVEQPGAESKGFGAATKKSGGKSRSNKKKK.

The segment at T82 to V85 is involved in Mg(2+) ion dislocation from EF-Tu. The segment covering A223–V265 has biased composition (low complexity). A disordered region spans residues A223 to K297. Residues S286–K297 show a composition bias toward basic residues.

This sequence belongs to the EF-Ts family.

Its subcellular location is the cytoplasm. In terms of biological role, associates with the EF-Tu.GDP complex and induces the exchange of GDP to GTP. It remains bound to the aminoacyl-tRNA.EF-Tu.GTP complex up to the GTP hydrolysis stage on the ribosome. This is Elongation factor Ts from Thermosynechococcus vestitus (strain NIES-2133 / IAM M-273 / BP-1).